We begin with the raw amino-acid sequence, 239 residues long: Cytochrome c oxidase subunit 2 (239 aa).

Over 1–26 (MATPAQLGLMDAASPVMEEMIYFHDH) the chain is Mitochondrial intermembrane. Residues 27–48 (VMLVLILITCLIFYSMLVLISS) form a helical membrane-spanning segment. Residues 49 to 62 (KYIYRFLTDGHVIE) are Mitochondrial matrix-facing. Residues 63–82 (TVWTVIPAIILVVVALPSLK) form a helical membrane-spanning segment. Residues 83–239 (LLYLTDELDN…ESLGSLNMKR (157 aa)) lie on the Mitochondrial intermembrane side of the membrane. 6 residues coordinate Cu cation: histidine 161, cysteine 196, glutamate 198, cysteine 200, histidine 204, and methionine 207. Glutamate 198 is a Mg(2+) binding site.

Belongs to the cytochrome c oxidase subunit 2 family. In terms of assembly, component of the cytochrome c oxidase (complex IV, CIV), a multisubunit enzyme composed of a catalytic core of 3 subunits and several supernumerary subunits. The complex exists as a monomer or a dimer and forms supercomplexes (SCs) in the inner mitochondrial membrane with ubiquinol-cytochrome c oxidoreductase (cytochrome b-c1 complex, complex III, CIII). Requires Cu cation as cofactor.

Its subcellular location is the mitochondrion inner membrane. It carries out the reaction 4 Fe(II)-[cytochrome c] + O2 + 8 H(+)(in) = 4 Fe(III)-[cytochrome c] + 2 H2O + 4 H(+)(out). Its function is as follows. Component of the cytochrome c oxidase, the last enzyme in the mitochondrial electron transport chain which drives oxidative phosphorylation. The respiratory chain contains 3 multisubunit complexes succinate dehydrogenase (complex II, CII), ubiquinol-cytochrome c oxidoreductase (cytochrome b-c1 complex, complex III, CIII) and cytochrome c oxidase (complex IV, CIV), that cooperate to transfer electrons derived from NADH and succinate to molecular oxygen, creating an electrochemical gradient over the inner membrane that drives transmembrane transport and the ATP synthase. Cytochrome c oxidase is the component of the respiratory chain that catalyzes the reduction of oxygen to water. Electrons originating from reduced cytochrome c in the intermembrane space (IMS) are transferred via the dinuclear copper A center (CU(A)) of subunit 2 and heme A of subunit 1 to the active site in subunit 1, a binuclear center (BNC) formed by heme A3 and copper B (CU(B)). The BNC reduces molecular oxygen to 2 water molecules using 4 electrons from cytochrome c in the IMS and 4 protons from the mitochondrial matrix. The protein is Cytochrome c oxidase subunit 2 (COII) of Branchiostoma lanceolatum (Common lancelet).